We begin with the raw amino-acid sequence, 138 residues long: MAKPIQRIGSRRNGPIGSRKNGRRIPKGVIHVQASFNNTIVTVTDVRGRVVSWSSAGACGFRGTRRGTPFAAQTAAGNAIRTVVDQGMQRAEVMIKGPGLGRDAALRAIRRSGILLSFVRDVTPMPHNGCRPPKKRRV.

Positions 1-23 (MAKPIQRIGSRRNGPIGSRKNGR) are disordered.

Belongs to the universal ribosomal protein uS11 family. In terms of assembly, part of the 30S ribosomal subunit.

The protein resides in the plastid. It localises to the chloroplast. This Platanus occidentalis (Sycamore) protein is Small ribosomal subunit protein uS11c.